Reading from the N-terminus, the 1383-residue chain is DNA-directed RNA polymerase subunit beta'' (1383 aa).

Zn(2+)-binding residues include C220, C289, C296, and C299.

The protein belongs to the RNA polymerase beta' chain family. RpoC2 subfamily. As to quaternary structure, in plastids the minimal PEP RNA polymerase catalytic core is composed of four subunits: alpha, beta, beta', and beta''. When a (nuclear-encoded) sigma factor is associated with the core the holoenzyme is formed, which can initiate transcription. Zn(2+) is required as a cofactor.

The protein localises to the plastid. It localises to the chloroplast. The enzyme catalyses RNA(n) + a ribonucleoside 5'-triphosphate = RNA(n+1) + diphosphate. In terms of biological role, DNA-dependent RNA polymerase catalyzes the transcription of DNA into RNA using the four ribonucleoside triphosphates as substrates. In Oenothera parviflora (Small-flowered evening primrose), this protein is DNA-directed RNA polymerase subunit beta''.